The chain runs to 900 residues: Minor teichoic acid biosynthesis protein GgaB (900 aa).

The protein belongs to the glycosyltransferase 2 family.

Its pathway is cell wall biogenesis; poly(glucopyranosyl N-acetylgalactosamine 1-phosphate) teichoic acid biosynthesis. Involved in the biosynthesis of galactosamine-containing minor teichoic acid, a non-essential cell wall polymer in B.subtilis 168. The chain is Minor teichoic acid biosynthesis protein GgaB (ggaB) from Bacillus subtilis (strain 168).